We begin with the raw amino-acid sequence, 352 residues long: S-adenosylmethionine:tRNA ribosyltransferase-isomerase (352 aa).

Belongs to the QueA family. As to quaternary structure, monomer.

Its subcellular location is the cytoplasm. It carries out the reaction 7-aminomethyl-7-carbaguanosine(34) in tRNA + S-adenosyl-L-methionine = epoxyqueuosine(34) in tRNA + adenine + L-methionine + 2 H(+). The protein operates within tRNA modification; tRNA-queuosine biosynthesis. Its function is as follows. Transfers and isomerizes the ribose moiety from AdoMet to the 7-aminomethyl group of 7-deazaguanine (preQ1-tRNA) to give epoxyqueuosine (oQ-tRNA). The polypeptide is S-adenosylmethionine:tRNA ribosyltransferase-isomerase (Bacteroides fragilis (strain ATCC 25285 / DSM 2151 / CCUG 4856 / JCM 11019 / LMG 10263 / NCTC 9343 / Onslow / VPI 2553 / EN-2)).